The primary structure comprises 338 residues: UDP-N-acetylenolpyruvoylglucosamine reductase (338 aa).

Residues 17 to 188 (IAARTDWWID…MYVDYRLRLR (172 aa)) enclose the FAD-binding PCMH-type domain. The active site involves R164. S237 functions as the Proton donor in the catalytic mechanism. The active site involves E333.

This sequence belongs to the MurB family. Requires FAD as cofactor.

It is found in the cytoplasm. The catalysed reaction is UDP-N-acetyl-alpha-D-muramate + NADP(+) = UDP-N-acetyl-3-O-(1-carboxyvinyl)-alpha-D-glucosamine + NADPH + H(+). It functions in the pathway cell wall biogenesis; peptidoglycan biosynthesis. In terms of biological role, cell wall formation. In Porphyromonas gingivalis (strain ATCC 33277 / DSM 20709 / CIP 103683 / JCM 12257 / NCTC 11834 / 2561), this protein is UDP-N-acetylenolpyruvoylglucosamine reductase.